The primary structure comprises 512 residues: Retinaldehyde dehydrogenase 3 (512 aa).

Positions 1 to 22 (MATANGAVENGQPDRKPPALPR) are disordered. Alanine 2 bears the N-acetylalanine mark. Residues lysine 204, glutamate 207, and 257–262 (GSTEVG) each bind NAD(+). Glutamate 280 acts as the Proton acceptor in catalysis. Cysteine 314 (nucleophile) is an active-site residue. The NAD(+) site is built by glutamine 361 and glutamate 411.

Belongs to the aldehyde dehydrogenase family. As to quaternary structure, homotetramer. In terms of tissue distribution, expressed at low levels in many tissues and at higher levels in salivary gland, stomach, and kidney.

The protein resides in the cytoplasm. It catalyses the reaction all-trans-retinal + NAD(+) + H2O = all-trans-retinoate + NADH + 2 H(+). The enzyme catalyses retinal + NAD(+) + H2O = retinoate + NADH + 2 H(+). It carries out the reaction all-trans-13,14-dihydroretinal + NAD(+) + H2O = all-trans-13,14-dihydroretinoate + NADH + 2 H(+). It functions in the pathway cofactor metabolism; retinol metabolism. Functionally, catalyzes the NAD-dependent oxidation of aldehyde substrates, such as all-trans-retinal and all-trans-13,14-dihydroretinal, to their corresponding carboxylic acids, all-trans-retinoate and all-trans-13,14-dihydroretinoate, respectively. High specificity for all-trans-retinal as substrate, can also accept acetaldehyde as substrate in vitro but with lower affinity. Required for the biosynthesis of normal levels of retinoate in the embryonic ocular and nasal regions; a critical lipid in the embryonic development of the eye and the nasal region. In Homo sapiens (Human), this protein is Retinaldehyde dehydrogenase 3 (ALDH1A3).